The following is a 90-amino-acid chain: uncharacterized protein (90 aa).

A signal peptide spans 1–20 (MAYKMLQVVLCSTLLIGALG).

This is an uncharacterized protein from Homo sapiens (Human).